The sequence spans 405 residues: L-rhamnonate dehydratase (405 aa).

H33 and R59 together coordinate substrate. Residues D226, E252, and E280 each contribute to the Mg(2+) site. The Proton acceptor role is filled by H329. Residue E349 coordinates substrate.

It belongs to the mandelate racemase/muconate lactonizing enzyme family. RhamD subfamily. As to quaternary structure, homooctamer; tetramer of dimers. Mg(2+) is required as a cofactor.

The catalysed reaction is L-rhamnonate = 2-dehydro-3-deoxy-L-rhamnonate + H2O. In terms of biological role, catalyzes the dehydration of L-rhamnonate to 2-keto-3-deoxy-L-rhamnonate (KDR). The sequence is that of L-rhamnonate dehydratase from Shigella boydii serotype 4 (strain Sb227).